Reading from the N-terminus, the 171-residue chain is Probable deoxyuridine 5'-triphosphate nucleotidohydrolase (171 aa).

This sequence belongs to the dCTP deaminase family. Archaeal dUTPase subfamily.

The enzyme catalyses dUTP + H2O = dUMP + diphosphate + H(+). It participates in pyrimidine metabolism; dUMP biosynthesis; dUMP from dCTP (dUTP route): step 2/2. In terms of biological role, this enzyme is involved in nucleotide metabolism: it produces dUMP, the immediate precursor of thymidine nucleotides and it decreases the intracellular concentration of dUTP so that uracil cannot be incorporated into DNA. In Methanosarcina mazei (strain ATCC BAA-159 / DSM 3647 / Goe1 / Go1 / JCM 11833 / OCM 88) (Methanosarcina frisia), this protein is Probable deoxyuridine 5'-triphosphate nucleotidohydrolase.